Reading from the N-terminus, the 98-residue chain is Large ribosomal subunit protein bL25 (98 aa).

Belongs to the bacterial ribosomal protein bL25 family. As to quaternary structure, part of the 50S ribosomal subunit; part of the 5S rRNA/L5/L18/L25 subcomplex. Contacts the 5S rRNA. Binds to the 5S rRNA independently of L5 and L18.

Its function is as follows. This is one of the proteins that binds to the 5S RNA in the ribosome where it forms part of the central protuberance. In Synechocystis sp. (strain ATCC 27184 / PCC 6803 / Kazusa), this protein is Large ribosomal subunit protein bL25.